Reading from the N-terminus, the 572-residue chain is Proline--tRNA ligase (572 aa).

The protein belongs to the class-II aminoacyl-tRNA synthetase family. ProS type 1 subfamily. In terms of assembly, homodimer.

It localises to the cytoplasm. It catalyses the reaction tRNA(Pro) + L-proline + ATP = L-prolyl-tRNA(Pro) + AMP + diphosphate. Functionally, catalyzes the attachment of proline to tRNA(Pro) in a two-step reaction: proline is first activated by ATP to form Pro-AMP and then transferred to the acceptor end of tRNA(Pro). As ProRS can inadvertently accommodate and process non-cognate amino acids such as alanine and cysteine, to avoid such errors it has two additional distinct editing activities against alanine. One activity is designated as 'pretransfer' editing and involves the tRNA(Pro)-independent hydrolysis of activated Ala-AMP. The other activity is designated 'posttransfer' editing and involves deacylation of mischarged Ala-tRNA(Pro). The misacylated Cys-tRNA(Pro) is not edited by ProRS. This is Proline--tRNA ligase from Yersinia pestis bv. Antiqua (strain Antiqua).